We begin with the raw amino-acid sequence, 208 residues long: Protein-L-isoaspartate O-methyltransferase (208 aa).

Serine 59 is an active-site residue.

It belongs to the methyltransferase superfamily. L-isoaspartyl/D-aspartyl protein methyltransferase family.

The protein resides in the cytoplasm. It carries out the reaction [protein]-L-isoaspartate + S-adenosyl-L-methionine = [protein]-L-isoaspartate alpha-methyl ester + S-adenosyl-L-homocysteine. Functionally, catalyzes the methyl esterification of L-isoaspartyl residues in peptides and proteins that result from spontaneous decomposition of normal L-aspartyl and L-asparaginyl residues. It plays a role in the repair and/or degradation of damaged proteins. The sequence is that of Protein-L-isoaspartate O-methyltransferase from Erwinia tasmaniensis (strain DSM 17950 / CFBP 7177 / CIP 109463 / NCPPB 4357 / Et1/99).